A 417-amino-acid chain; its full sequence is Serine hydroxymethyltransferase (417 aa).

(6S)-5,6,7,8-tetrahydrofolate contacts are provided by residues Leu-121 and 125–127 (GHL). The residue at position 230 (Lys-230) is an N6-(pyridoxal phosphate)lysine. Residue 355–357 (SPF) coordinates (6S)-5,6,7,8-tetrahydrofolate.

This sequence belongs to the SHMT family. Homodimer. Requires pyridoxal 5'-phosphate as cofactor.

It localises to the cytoplasm. The catalysed reaction is (6R)-5,10-methylene-5,6,7,8-tetrahydrofolate + glycine + H2O = (6S)-5,6,7,8-tetrahydrofolate + L-serine. It participates in one-carbon metabolism; tetrahydrofolate interconversion. The protein operates within amino-acid biosynthesis; glycine biosynthesis; glycine from L-serine: step 1/1. In terms of biological role, catalyzes the reversible interconversion of serine and glycine with tetrahydrofolate (THF) serving as the one-carbon carrier. This reaction serves as the major source of one-carbon groups required for the biosynthesis of purines, thymidylate, methionine, and other important biomolecules. Also exhibits THF-independent aldolase activity toward beta-hydroxyamino acids, producing glycine and aldehydes, via a retro-aldol mechanism. The sequence is that of Serine hydroxymethyltransferase from Legionella pneumophila (strain Corby).